The primary structure comprises 231 residues: Acyl-protein thioesterase 2 (231 aa).

The S-palmitoyl cysteine moiety is linked to residue C2. Phosphoserine is present on S82. Catalysis depends on charge relay system residues S122, D176, and H210.

The protein belongs to the AB hydrolase superfamily. AB hydrolase 2 family.

It is found in the cytoplasm. The enzyme catalyses S-hexadecanoyl-L-cysteinyl-[protein] + H2O = L-cysteinyl-[protein] + hexadecanoate + H(+). It carries out the reaction prostaglandin E2 1-glyceryl ester + H2O = prostaglandin E2 + glycerol + H(+). The catalysed reaction is 1-hexadecanoyl-sn-glycero-3-phosphocholine + H2O = sn-glycerol 3-phosphocholine + hexadecanoate + H(+). It catalyses the reaction 1-octadecanoyl-sn-glycero-3-phosphocholine + H2O = octadecanoate + sn-glycerol 3-phosphocholine + H(+). The enzyme catalyses 1-hexadecanoyl-sn-glycero-3-phosphate + H2O = sn-glycerol 3-phosphate + hexadecanoate + H(+). It carries out the reaction 1-hexadecanoyl-sn-glycero-3-phospho-L-serine + H2O = sn-glycero-3-phospho-L-serine + hexadecanoate + H(+). In terms of biological role, acts as an acyl-protein thioesterase hydrolyzing fatty acids from S-acylated cysteine residues in proteins such as trimeric G alpha proteins, GSDMD, GAP43, ZDHHC6 or HRAS. Deacylates GAP43. Mediates depalmitoylation of ZDHHC6. Has lysophospholipase activity. Hydrolyzes prostaglandin glycerol esters (PG-Gs) in the following order prostaglandin D2-glycerol ester (PGD2-G) &gt; prostaglandin E2 glycerol ester (PGE2-G) &gt; prostaglandin F2-alpha-glycerol ester (PGF2-alpha-G). Hydrolyzes 1-arachidonoylglycerol but not 2-arachidonoylglycerol or arachidonoylethanolamide. The polypeptide is Acyl-protein thioesterase 2 (Lypla2) (Rattus norvegicus (Rat)).